The sequence spans 814 residues: DNA topoisomerase 1 (814 aa).

A compositionally biased stretch (low complexity) spans 1 to 12 (MSSSDSDSVSLS). The segment at 1-180 (MSSSDSDSVS…PNDEEDEDED (180 aa)) is disordered. Residues 13-22 (IRRRQRRGSS) are compositionally biased toward basic residues. A phosphoserine mark is found at Ser52, Ser54, and Ser136. Thr138 carries the post-translational modification Phosphothreonine. 3 interaction with DNA regions span residues 404–405 (KY), 467–472 (RAGNEK), and 559–561 (SAK). One can recognise a Topo IB-type catalytic domain in the interval 411–814 (GSSLKGQSDL…AADTPPDWKW (404 aa)). Tyr773 (O-(3'-phospho-DNA)-tyrosine intermediate) is an active-site residue.

Belongs to the type IB topoisomerase family. In terms of assembly, monomer.

The enzyme catalyses ATP-independent breakage of single-stranded DNA, followed by passage and rejoining.. Functionally, releases the supercoiling and torsional tension of DNA introduced during the DNA replication and transcription by transiently cleaving and rejoining one strand of the DNA duplex. Introduces a single-strand break via transesterification at a target site in duplex DNA. The scissile phosphodiester is attacked by the catalytic tyrosine of the enzyme, resulting in the formation of a DNA-(3'-phosphotyrosyl)-enzyme intermediate and the expulsion of a 5'-OH DNA strand. TThe free DNA strand then rotates around the intact phosphodiester bond on the opposing strand, thus removing DNA supercoils. Finally, in the religation step, the DNA 5'-OH attacks the covalent intermediate to expel the active-site tyrosine and restore the DNA phosphodiester backbone. In Schizosaccharomyces pombe (strain 972 / ATCC 24843) (Fission yeast), this protein is DNA topoisomerase 1 (top1).